A 380-amino-acid chain; its full sequence is Cystathionine beta-lyase (380 aa).

An N6-(pyridoxal phosphate)lysine modification is found at K196.

Belongs to the trans-sulfuration enzymes family. It depends on pyridoxal 5'-phosphate as a cofactor.

It localises to the cytoplasm. The enzyme catalyses L,L-cystathionine + H2O = L-homocysteine + pyruvate + NH4(+). It carries out the reaction an S-substituted L-cysteine + H2O = a thiol + pyruvate + NH4(+). Its pathway is amino-acid biosynthesis; L-methionine biosynthesis via de novo pathway; L-homocysteine from L-cystathionine: step 1/1. Functionally, the enzymatic degradation of amino acids in cheese is believed to generate aroma compounds and therefore to be essential for flavor development. Cystathionine beta-lyase (CBL) can convert cystathionine to homocysteine but is also able to catalyze an alpha, gamma elimination. With methionine as a substrate, it produces volatile sulfur compounds which are important for flavor formation in Gouda cheese. The protein is Cystathionine beta-lyase (metC) of Lactococcus lactis subsp. cremoris (Streptococcus cremoris).